Consider the following 217-residue polypeptide: Adenylate kinase (217 aa).

10 to 15 contacts ATP; the sequence is GAGKGT. An NMP region spans residues 30–59; it reads STGDMLRAAVKAGTPLGVEAKKVMDAGGLV. Residues Thr31, Arg36, 57–59, 85–88, and Gln92 contribute to the AMP site; these read GLV and GFPR. An LID region spans residues 122 to 159; the sequence is GRRAHLASGRTYHVKYNPPKVAGKDDLTGEDLVQRDDD. ATP contacts are provided by residues Arg123 and 132–133; that span reads TY. AMP is bound by residues Arg156 and Arg167. An ATP-binding site is contributed by Gly203.

The protein belongs to the adenylate kinase family. As to quaternary structure, monomer.

It is found in the cytoplasm. It carries out the reaction AMP + ATP = 2 ADP. It functions in the pathway purine metabolism; AMP biosynthesis via salvage pathway; AMP from ADP: step 1/1. In terms of biological role, catalyzes the reversible transfer of the terminal phosphate group between ATP and AMP. Plays an important role in cellular energy homeostasis and in adenine nucleotide metabolism. This is Adenylate kinase from Aromatoleum aromaticum (strain DSM 19018 / LMG 30748 / EbN1) (Azoarcus sp. (strain EbN1)).